Reading from the N-terminus, the 1740-residue chain is DNA polymerase (1740 aa).

The interval 472–491 is disordered; the sequence is IEMPHNQEDSDSEKEDEDTD. Residues 480–491 show a composition bias toward acidic residues; it reads DSDSEKEDEDTD. Residues 1189-1334 form the DOD-type homing endonuclease domain; sequence VWGFFMGDGS…LFYLLKSLGY (146 aa). The tract at residues 1673-1701 is disordered; that stretch reads PKESGSKTAKKPYQSQKLQKTKSSNKSQI. Polar residues predominate over residues 1685–1700; the sequence is YQSQKLQKTKSSNKSQ.

The protein belongs to the DNA polymerase type-B family. Post-translationally, this protein undergoes a protein self splicing that involves a post-translational excision of the intervening region (intein) followed by peptide ligation.

The enzyme catalyses DNA(n) + a 2'-deoxyribonucleoside 5'-triphosphate = DNA(n+1) + diphosphate. In Acanthamoeba polyphaga (Amoeba), this protein is DNA polymerase (POLB).